The following is a 215-amino-acid chain: Flavin-dependent thymidylate synthase (215 aa).

A ThyX domain is found at Met-1–Trp-215. Residues Ser-56, Arg-79–Arg-81, and Glu-87 each bind FAD. Residues Gln-76–Arg-79, Glu-87–Arg-91, and Arg-155 each bind dUMP. The ThyX motif signature appears at Arg-79–Ser-89. His-177 is an FAD binding site. Position 182 (Arg-182) interacts with dUMP. The Involved in ionization of N3 of dUMP, leading to its activation role is filled by Arg-182.

The protein belongs to the thymidylate synthase ThyX family. Homotetramer. The cofactor is FAD.

The enzyme catalyses dUMP + (6R)-5,10-methylene-5,6,7,8-tetrahydrofolate + NADPH + H(+) = dTMP + (6S)-5,6,7,8-tetrahydrofolate + NADP(+). The protein operates within pyrimidine metabolism; dTTP biosynthesis. Functionally, catalyzes the reductive methylation of 2'-deoxyuridine-5'-monophosphate (dUMP) to 2'-deoxythymidine-5'-monophosphate (dTMP) while utilizing 5,10-methylenetetrahydrofolate (mTHF) as the methyl donor, and NADPH and FADH(2) as the reductant. This Synechocystis sp. (strain ATCC 27184 / PCC 6803 / Kazusa) protein is Flavin-dependent thymidylate synthase.